We begin with the raw amino-acid sequence, 156 residues long: MKCPFCQHDDTQVLDTRISEEGDSIRRRRRCVSCDKRFTTYERIELAMPVIVKKNGSRTDFDPKKLQASLQLALRKRPVSAEAVDAAIHRIEQKLLSSGEREVVSGQIGELVMRELQRLDKIAYIRFASVYKSFEDVAEFQDAIAEVGRERKPPSK.

The segment at 3–34 is a zinc-finger region; sequence CPFCQHDDTQVLDTRISEEGDSIRRRRRCVSC. Residues 49-139 enclose the ATP-cone domain; it reads PVIVKKNGSR…VYKSFEDVAE (91 aa).

The protein belongs to the NrdR family. Zn(2+) is required as a cofactor.

Negatively regulates transcription of bacterial ribonucleotide reductase nrd genes and operons by binding to NrdR-boxes. This Herminiimonas arsenicoxydans protein is Transcriptional repressor NrdR.